The following is a 470-amino-acid chain: Probable citrate synthase, mitochondrial (470 aa).

Catalysis depends on residues histidine 297, histidine 351, and aspartate 406.

The protein belongs to the citrate synthase family. Homodimer.

Its subcellular location is the mitochondrion matrix. It catalyses the reaction oxaloacetate + acetyl-CoA + H2O = citrate + CoA + H(+). Its pathway is carbohydrate metabolism; tricarboxylic acid cycle; isocitrate from oxaloacetate: step 1/2. In Leishmania major, this protein is Probable citrate synthase, mitochondrial.